We begin with the raw amino-acid sequence, 86 residues long: RNA-binding protein Hfq (86 aa).

In terms of domain architecture, Sm spans 12 to 73; sequence DIFLNQVRKE…ISTITPQKPV (62 aa).

Belongs to the Hfq family. Homohexamer.

Its function is as follows. RNA chaperone that binds small regulatory RNA (sRNAs) and mRNAs to facilitate mRNA translational regulation in response to envelope stress, environmental stress and changes in metabolite concentrations. Also binds with high specificity to tRNAs. The chain is RNA-binding protein Hfq from Thermoanaerobacter pseudethanolicus (strain ATCC 33223 / 39E) (Clostridium thermohydrosulfuricum).